A 65-amino-acid polypeptide reads, in one-letter code: Small ribosomal subunit protein bS21 (65 aa).

The protein belongs to the bacterial ribosomal protein bS21 family.

This is Small ribosomal subunit protein bS21 from Cytophaga hutchinsonii (strain ATCC 33406 / DSM 1761 / CIP 103989 / NBRC 15051 / NCIMB 9469 / D465).